Consider the following 596-residue polypeptide: Transketolase-like protein 1 (596 aa).

H46 lines the substrate pocket. Thiamine diphosphate contacts are provided by residues S49 and 94 to 96 (GWL). D126 contacts Mg(2+). 2 residues coordinate thiamine diphosphate: G127 and N156. Mg(2+)-binding residues include N156 and L158. Residues K218 and H232 each coordinate thiamine diphosphate. The substrate site is built by H232, R292, and S319. E340 and F366 together coordinate thiamine diphosphate. E340 serves as the catalytic Proton donor. The substrate site is built by H390 and D398. Position 402 (Q402) interacts with thiamine diphosphate. A substrate-binding site is contributed by R448.

This sequence belongs to the transketolase family. Homodimer. It depends on Mg(2+) as a cofactor. Ca(2+) is required as a cofactor. The cofactor is Mn(2+). Co(2+) serves as cofactor. Requires thiamine diphosphate as cofactor.

It is found in the cytoplasm. It carries out the reaction D-sedoheptulose 7-phosphate + D-glyceraldehyde 3-phosphate = aldehydo-D-ribose 5-phosphate + D-xylulose 5-phosphate. In terms of biological role, catalyzes the transfer of a two-carbon ketol group from a ketose donor to an aldose acceptor, via a covalent intermediate with the cofactor thiamine pyrophosphate. This is Transketolase-like protein 1 (TKTL1) from Macaca fascicularis (Crab-eating macaque).